Reading from the N-terminus, the 631-residue chain is Shootin-1 (631 aa).

Residue Met-1 is modified to N-acetylmethionine. Phosphoserine occurs at positions 3 and 4. Residues 7 to 353 (EKQLQLITSL…RVNQSENSVP (347 aa)) adopt a coiled-coil conformation. Ser-101 carries the post-translational modification Phosphoserine; by PAK1. Ser-249 carries the phosphoserine modification. A disordered region spans residues 343-511 (KRVNQSENSV…SESKSMPVLG (169 aa)). Pro residues predominate over residues 352 to 369 (VPPPPPPPPPLPPPPPNP). A Phosphoserine modification is found at Ser-375. Residues 403-418 (TDLKRQAVEEMMDRIK) show a composition bias toward basic and acidic residues. Positions 456 to 465 (LNKSTSSRSL) are enriched in polar residues. Ser-473 carries the post-translational modification Phosphoserine. Thr-487 is modified (phosphothreonine). The span at 490–505 (ADSSSPTGILATSESK) shows a compositional bias: polar residues. Phosphoserine is present on Ser-494. Position 496 is a phosphothreonine (Thr-496). Residues Ser-506, Ser-515, Ser-532, and Ser-534 each carry the phosphoserine modification. Disordered stretches follow at residues 524-566 (KTLE…IGCR) and 579-631 (VVVL…SSNC). Thr-537 is modified (phosphothreonine). The segment covering 550–561 (CTSSKVTFQPPS) has biased composition (polar residues). A compositionally biased stretch (basic and acidic residues) spans 590–631 (PQTKDQVAEKDPTQHKEDEGEIQPENKEDSIENVRETDSSNC).

The protein belongs to the shootin family. Interacts with L1CAM; this interaction occurs in axonal growth cones. Interacts with actin filament retrograde flow; this interaction is enhanced in a netrin-1- and PAK1-dependent manner and promotes F-actin-substrate coupling and concomitant formation of traction forces at axonal growth cones. Interacts with RUFY3. Interacts with PFN2. Interacts (via N-terminus) with KIF20B; this interaction is direct and promotes the association of SHTN1 to microtubules in primary neurons. Associates with microtubule. In terms of processing, phosphorylated on Ser-101 and Ser-249 by PAK1 through a CDC42- and RAC1-dependent signaling pathway, which enhances its association with F-actin retrograde flow in filopodia and lamellipodia of axonal growth cones. Phosphorylation on Ser-101 and Ser-249 is increased by netrin-1.

The protein localises to the perikaryon. Its subcellular location is the cell projection. The protein resides in the axon. It is found in the growth cone. It localises to the cytoplasm. The protein localises to the cytoskeleton. Its subcellular location is the filopodium. The protein resides in the lamellipodium. Its function is as follows. Involved in the generation of internal asymmetric signals required for neuronal polarization and neurite outgrowth. Mediates netrin-1-induced F-actin-substrate coupling or 'clutch engagement' within the axon growth cone through activation of CDC42, RAC1 and PAK1-dependent signaling pathway, thereby converting the F-actin retrograde flow into traction forces, concomitantly with filopodium extension and axon outgrowth. Plays a role in cytoskeletal organization by regulating the subcellular localization of phosphoinositide 3-kinase (PI3K) activity at the axonal growth cone. Also plays a role in regenerative neurite outgrowth. In the developing cortex, cooperates with KIF20B to promote both the transition from the multipolar to the bipolar stage and the radial migration of cortical neurons from the ventricular zone toward the superficial layer of the neocortex. Involved in the accumulation of phosphatidylinositol 3,4,5-trisphosphate (PIP3) in the growth cone of primary hippocampal neurons. The chain is Shootin-1 from Homo sapiens (Human).